Reading from the N-terminus, the 730-residue chain is Wall-associated receptor kinase-like 3 (730 aa).

Residues 1 to 25 (MKTKTYNFRYIVASVLTLLMNGSSA) form the signal peptide. Topologically, residues 26 to 357 (ATPPNSNSSS…AKLAHVLRGV (332 aa)) are extracellular. N-linked (GlcNAc...) asparagine glycosylation is found at Asn-32, Asn-38, Asn-68, Asn-90, Asn-119, Asn-132, Asn-212, Asn-233, and Asn-269. Positions 283–340 (CLCRYGYFSRMSYRSCYCGSGYRGNPYIRGGCIDIDECEVPNKCGEDTCVNMAGRYSC) are atypical EGF-like. Disulfide bonds link Cys-285–Cys-298, Cys-320–Cys-331, and Cys-326–Cys-340. Residues 358–378 (LIGLLGLLFFVIGIFGLYKFI) traverse the membrane as a helical segment. Residues 379–730 (RKRRRIIRSM…LMEINRIYDS (352 aa)) lie on the Cytoplasmic side of the membrane. Positions 428–699 (FSIDRVLGQG…REVSIKLERI (272 aa)) constitute a Protein kinase domain. ATP contacts are provided by residues 434–442 (LGQGGQGTV) and Lys-456. Asp-553 serves as the catalytic Proton acceptor. Residues 703–730 (PKDLDVHTENEEEEEEDQLMEINRIYDS) form a disordered region. Positions 712 to 721 (NEEEEEEDQL) are enriched in acidic residues.

The protein belongs to the protein kinase superfamily. Ser/Thr protein kinase family. As to expression, preferentially expressed in roots and flowers.

The protein localises to the membrane. It catalyses the reaction L-seryl-[protein] + ATP = O-phospho-L-seryl-[protein] + ADP + H(+). The enzyme catalyses L-threonyl-[protein] + ATP = O-phospho-L-threonyl-[protein] + ADP + H(+). Functionally, serine/threonine-protein kinase that may function as a signaling receptor of extracellular matrix component. This Arabidopsis thaliana (Mouse-ear cress) protein is Wall-associated receptor kinase-like 3 (WAKL3).